The sequence spans 198 residues: Transcription factor FapR (198 aa).

Positions 102 to 167 constitute a MaoC-like domain; the sequence is TRIARGHHLF…HGRTIVEVNS (66 aa).

The protein belongs to the FapR family.

Its function is as follows. Transcriptional factor involved in regulation of membrane lipid biosynthesis by repressing genes involved in fatty acid and phospholipid metabolism. This Geobacillus kaustophilus (strain HTA426) protein is Transcription factor FapR.